Here is a 362-residue protein sequence, read N- to C-terminus: Alcohol dehydrogenase 13 (362 aa).

Cys51, His73, Cys104, Cys107, Cys110, Cys118, and Cys168 together coordinate Zn(2+). His73 is a substrate binding site. NAD(+) is bound by residues 193–198 and 280–282; these read GLGGLG and VGA.

This sequence belongs to the zinc-containing alcohol dehydrogenase family. Class-III subfamily. In terms of assembly, homodimer. The cofactor is Zn(2+).

The polypeptide is Alcohol dehydrogenase 13 (Catharanthus roseus (Madagascar periwinkle)).